A 307-amino-acid polypeptide reads, in one-letter code: MRDPINYNAFTREQWQQFSADATLPLTQESLRQIKAFNDRISLQDVQDIYIPLVHLVHLEFDHYRQLQRDKATFLKQPQQRVPFIIGIAGSVAVGKSTAARLLEVLLNHYFTDQRIQLITTDGFLYSNEELKKRNLMARKGFPESYDMTALIQFLNDVKAGKELIKAPVYSHKVYDIVPDQFDYIMHPDVLIVEGINTLQLPTNEQIYVSDFTDFSIYVDADPTLIESWFLERFELLLATAFQDPTNYYYPYAIGDHDEAIAKSKRVWRDIDLKNLEEYILPTRNRADMIIHKTFGHRIDRLLLRKY.

An ATP-binding site is contributed by 90-97; that stretch reads GSVAVGKS.

The protein belongs to the prokaryotic pantothenate kinase family.

The protein resides in the cytoplasm. It carries out the reaction (R)-pantothenate + ATP = (R)-4'-phosphopantothenate + ADP + H(+). Its pathway is cofactor biosynthesis; coenzyme A biosynthesis; CoA from (R)-pantothenate: step 1/5. In Levilactobacillus brevis (strain ATCC 367 / BCRC 12310 / CIP 105137 / JCM 1170 / LMG 11437 / NCIMB 947 / NCTC 947) (Lactobacillus brevis), this protein is Pantothenate kinase.